The chain runs to 147 residues: Hemoglobin subunit beta (147 aa).

Positions E3–H147 constitute a Globin domain. Heme b is bound by residues H64 and H93.

The protein belongs to the globin family. In terms of assembly, heterotetramer of two alpha chains and two beta chains. Red blood cells.

Functionally, involved in oxygen transport from gills to the various peripheral tissues. This Trematomus hansoni (Striped rockcod) protein is Hemoglobin subunit beta (hbb).